The sequence spans 68 residues: Protein SlyX homolog (68 aa).

It belongs to the SlyX family.

The polypeptide is Protein SlyX homolog (Brucella suis (strain ATCC 23445 / NCTC 10510)).